We begin with the raw amino-acid sequence, 198 residues long: dITP/XTP pyrophosphatase (198 aa).

10 to 15 (SGSDHK) contributes to the substrate binding site. Glu-43 and Asp-72 together coordinate Mg(2+). Residue Asp-72 is the Proton acceptor of the active site. Residues Ser-73, 154–157 (FGYD), Lys-177, and 182–183 (HR) contribute to the substrate site.

It belongs to the HAM1 NTPase family. In terms of assembly, homodimer. Requires Mg(2+) as cofactor.

It carries out the reaction XTP + H2O = XMP + diphosphate + H(+). The catalysed reaction is dITP + H2O = dIMP + diphosphate + H(+). It catalyses the reaction ITP + H2O = IMP + diphosphate + H(+). Pyrophosphatase that catalyzes the hydrolysis of nucleoside triphosphates to their monophosphate derivatives, with a high preference for the non-canonical purine nucleotides XTP (xanthosine triphosphate), dITP (deoxyinosine triphosphate) and ITP. Seems to function as a house-cleaning enzyme that removes non-canonical purine nucleotides from the nucleotide pool, thus preventing their incorporation into DNA/RNA and avoiding chromosomal lesions. The sequence is that of dITP/XTP pyrophosphatase from Leptospira biflexa serovar Patoc (strain Patoc 1 / Ames).